We begin with the raw amino-acid sequence, 129 residues long: Glycine cleavage system H protein (129 aa).

Residues 24–106 (EAVVGITEHA…YGAGWLFRIK (83 aa)) enclose the Lipoyl-binding domain. The residue at position 65 (Lys-65) is an N6-lipoyllysine.

The protein belongs to the GcvH family. In terms of assembly, the glycine cleavage system is composed of four proteins: P, T, L and H. Requires (R)-lipoate as cofactor.

In terms of biological role, the glycine cleavage system catalyzes the degradation of glycine. The H protein shuttles the methylamine group of glycine from the P protein to the T protein. This chain is Glycine cleavage system H protein, found in Aeromonas salmonicida (strain A449).